A 429-amino-acid chain; its full sequence is 3-phosphoshikimate 1-carboxyvinyltransferase (429 aa).

3 residues coordinate 3-phosphoshikimate: lysine 23, serine 24, and arginine 28. Lysine 23 serves as a coordination point for phosphoenolpyruvate. Residues glycine 95 and arginine 123 each contribute to the phosphoenolpyruvate site. Positions 168, 170, 316, and 343 each coordinate 3-phosphoshikimate. Phosphoenolpyruvate is bound at residue glutamine 170. Aspartate 316 serves as the catalytic Proton acceptor. Positions 347 and 389 each coordinate phosphoenolpyruvate.

The protein belongs to the EPSP synthase family. In terms of assembly, monomer.

It is found in the cytoplasm. The catalysed reaction is 3-phosphoshikimate + phosphoenolpyruvate = 5-O-(1-carboxyvinyl)-3-phosphoshikimate + phosphate. It participates in metabolic intermediate biosynthesis; chorismate biosynthesis; chorismate from D-erythrose 4-phosphate and phosphoenolpyruvate: step 6/7. Its function is as follows. Catalyzes the transfer of the enolpyruvyl moiety of phosphoenolpyruvate (PEP) to the 5-hydroxyl of shikimate-3-phosphate (S3P) to produce enolpyruvyl shikimate-3-phosphate and inorganic phosphate. This is 3-phosphoshikimate 1-carboxyvinyltransferase from Bacillus cereus (strain 03BB102).